We begin with the raw amino-acid sequence, 739 residues long: Phosphoribosylformylglycinamidine synthase subunit PurL (739 aa).

Histidine 54 is an active-site residue. ATP contacts are provided by tyrosine 57 and lysine 96. A Mg(2+)-binding site is contributed by glutamate 98. Substrate contacts are provided by residues 99–102 and arginine 121; that span reads SHNH. The active-site Proton acceptor is the histidine 100. Aspartate 122 serves as a coordination point for Mg(2+). Glutamine 245 lines the substrate pocket. Aspartate 273 contacts Mg(2+). 317–319 contributes to the substrate binding site; the sequence is ESQ. 2 residues coordinate ATP: aspartate 500 and glycine 537. Position 538 (asparagine 538) interacts with Mg(2+). Residue serine 540 participates in substrate binding.

The protein belongs to the FGAMS family. Monomer. Part of the FGAM synthase complex composed of 1 PurL, 1 PurQ and 2 PurS subunits.

Its subcellular location is the cytoplasm. It carries out the reaction N(2)-formyl-N(1)-(5-phospho-beta-D-ribosyl)glycinamide + L-glutamine + ATP + H2O = 2-formamido-N(1)-(5-O-phospho-beta-D-ribosyl)acetamidine + L-glutamate + ADP + phosphate + H(+). It functions in the pathway purine metabolism; IMP biosynthesis via de novo pathway; 5-amino-1-(5-phospho-D-ribosyl)imidazole from N(2)-formyl-N(1)-(5-phospho-D-ribosyl)glycinamide: step 1/2. In terms of biological role, part of the phosphoribosylformylglycinamidine synthase complex involved in the purines biosynthetic pathway. Catalyzes the ATP-dependent conversion of formylglycinamide ribonucleotide (FGAR) and glutamine to yield formylglycinamidine ribonucleotide (FGAM) and glutamate. The FGAM synthase complex is composed of three subunits. PurQ produces an ammonia molecule by converting glutamine to glutamate. PurL transfers the ammonia molecule to FGAR to form FGAM in an ATP-dependent manner. PurS interacts with PurQ and PurL and is thought to assist in the transfer of the ammonia molecule from PurQ to PurL. The polypeptide is Phosphoribosylformylglycinamidine synthase subunit PurL (Exiguobacterium sp. (strain ATCC BAA-1283 / AT1b)).